The following is a 202-amino-acid chain: LexA repressor (202 aa).

Residues 28 to 48 (RAEIAQRLGFRSPNAAEEHLK) constitute a DNA-binding region (H-T-H motif). Catalysis depends on for autocatalytic cleavage activity residues Ser-119 and Lys-156.

It belongs to the peptidase S24 family. In terms of assembly, homodimer.

It carries out the reaction Hydrolysis of Ala-|-Gly bond in repressor LexA.. Functionally, represses a number of genes involved in the response to DNA damage (SOS response), including recA and lexA. Binds to the 16 bp palindromic sequence 5'-CTGTATATATATACAG-3'. In the presence of single-stranded DNA, RecA interacts with LexA causing an autocatalytic cleavage which disrupts the DNA-binding part of LexA, leading to derepression of the SOS regulon and eventually DNA repair. In Citrobacter koseri (strain ATCC BAA-895 / CDC 4225-83 / SGSC4696), this protein is LexA repressor.